Here is a 152-residue protein sequence, read N- to C-terminus: Arginine repressor (152 aa).

This sequence belongs to the ArgR family.

It is found in the cytoplasm. Its pathway is amino-acid biosynthesis; L-arginine biosynthesis [regulation]. In terms of biological role, regulates arginine biosynthesis genes. The chain is Arginine repressor from Caldicellulosiruptor saccharolyticus (strain ATCC 43494 / DSM 8903 / Tp8T 6331).